Reading from the N-terminus, the 546-residue chain is Chaperonin GroEL 1 (546 aa).

ATP is bound by residues 30–33 (TLGP), Lys51, 87–91 (DGTTT), Gly415, and Asp495. Positions 527–546 (DAAPTAAPGGPGAGGPGFDF) are disordered. The span at 535–546 (GGPGAGGPGFDF) shows a compositional bias: gly residues.

It belongs to the chaperonin (HSP60) family. In terms of assembly, forms a cylinder of 14 subunits composed of two heptameric rings stacked back-to-back. Interacts with the co-chaperonin GroES.

It is found in the cytoplasm. The enzyme catalyses ATP + H2O + a folded polypeptide = ADP + phosphate + an unfolded polypeptide.. Its function is as follows. Together with its co-chaperonin GroES, plays an essential role in assisting protein folding. The GroEL-GroES system forms a nano-cage that allows encapsulation of the non-native substrate proteins and provides a physical environment optimized to promote and accelerate protein folding. In Burkholderia lata (strain ATCC 17760 / DSM 23089 / LMG 22485 / NCIMB 9086 / R18194 / 383), this protein is Chaperonin GroEL 1.